The following is a 101-amino-acid chain: Small ribosomal subunit protein uS14 (101 aa).

The segment at 52–72 (PRDSSPVRQRRRCRSTGRPRG) is disordered. Over residues 59–72 (RQRRRCRSTGRPRG) the composition is skewed to basic residues.

The protein belongs to the universal ribosomal protein uS14 family. As to quaternary structure, part of the 30S ribosomal subunit. Contacts proteins S3 and S10.

In terms of biological role, binds 16S rRNA, required for the assembly of 30S particles and may also be responsible for determining the conformation of the 16S rRNA at the A site. The polypeptide is Small ribosomal subunit protein uS14 (Nitrosococcus oceani (strain ATCC 19707 / BCRC 17464 / JCM 30415 / NCIMB 11848 / C-107)).